Here is a 280-residue protein sequence, read N- to C-terminus: Inner kinetochore subunit fta1 (280 aa).

Belongs to the CENP-L/IML3 family. Component of the inner kinetochore constitutive centromere-associated network (CCAN) (also known as central kinetochore Sim4 complex in fission yeast), which is composed of at least cnl2, cnp3, cnp20, fta1, fta2, fta3, fta4, fta6, fta7, mal2, mhf1, mhf2, mis6, mis15, mis17, sim4 and wip1.

It is found in the nucleus. The protein localises to the chromosome. It localises to the centromere. Its subcellular location is the kinetochore. Its function is as follows. Component of the kinetochore, a multiprotein complex that assembles on centromeric DNA and attaches chromosomes to spindle microtubules, mediating chromosome segregation and sister chromatid segregation during meiosis and mitosis. Component of the inner kinetochore constitutive centromere-associated network (CCAN), which serves as a structural platform for outer kinetochore assembly. The polypeptide is Inner kinetochore subunit fta1 (fta1) (Schizosaccharomyces pombe (strain 972 / ATCC 24843) (Fission yeast)).